The primary structure comprises 455 residues: Beta-1,4-mannosyltransferase bre-3 (455 aa).

This sequence belongs to the glycosyltransferase 2 family. As to expression, endothelial cells.

Its subcellular location is the cytoplasm. It participates in protein modification; protein glycosylation. In terms of biological role, glycosyltransferase with a proposed role in glycosphingolipid biosynthesis. Involved in susceptibility to pore-forming crystal toxins in conjunction with bre-1, bre-2, bre-4 and bre-5. Involved in resistance to the nematotoxic C.cinerea galectin Cgl2. Has a role in determining brood size. In Caenorhabditis elegans, this protein is Beta-1,4-mannosyltransferase bre-3 (bre-3).